We begin with the raw amino-acid sequence, 383 residues long: tRNA pseudouridine synthase B (383 aa).

The active-site Nucleophile is D53.

It belongs to the pseudouridine synthase TruB family. Type 1 subfamily.

The enzyme catalyses uridine(55) in tRNA = pseudouridine(55) in tRNA. Its function is as follows. Responsible for synthesis of pseudouridine from uracil-55 in the psi GC loop of transfer RNAs. In Tropheryma whipplei (strain TW08/27) (Whipple's bacillus), this protein is tRNA pseudouridine synthase B.